Reading from the N-terminus, the 105-residue chain is U-scoloptoxin(10)-Sm3a (105 aa).

A signal peptide spans 1 to 23; that stretch reads MYKFIFIFFTVFFLINIIEESXT.

This sequence belongs to the scoloptoxin-10 family. In terms of processing, contains 3 disulfide bonds. As to expression, expressed by the venom gland.

Its subcellular location is the secreted. The protein is U-scoloptoxin(10)-Sm3a of Scolopendra morsitans (Tanzanian blue ringleg centipede).